Reading from the N-terminus, the 490-residue chain is Secretory immunoglobulin A-binding protein EsiB (490 aa).

The first 23 residues, 1–23 (MKKSLLAVMLTGLFALVSLPALG), serve as a signal peptide directing secretion. 11 Sel1-like repeats span residues 39–74 (AKAQ…EQGY), 77–109 (AEYV…ALKG), 111–145 (PQAQ…AEQG), 153–182 (MGDA…EQGN), 185–218 (SCNQ…TSGD), 222–254 (QLHL…EQGN), 256–290 (IAQF…EQGN), 291–327 (SDGQ…EQGD), 328–361 (ATAQ…AAKG), 364–397 (AAQF…AEQG), and 399–430 (SAAQ…DTAS). Histidine 122, glutamate 159, and aspartate 161 together coordinate Mg(2+).

Interacts with human secreted IgA (SIgA) at least via resides 244-260. Requires Mg(2+) as cofactor.

The protein localises to the cell surface. Upon host (human neutrophil) infection interferes with productive FCAR signaling, inhibiting secreted IgA (SIgA) effector functions and probably avoiding neutrophil activation. Inhibits the SIgA-mediated oxidative burst by neutrophils, decreases generation of ROS (reactive oxygen species) by neutrophils and reduces chemotaxis by neutrophils, all of which are SIgA effector functions used to stimulate the immune response. Does not block SIgA-binding to its receptor (FCAR) on neutrophils, but it decreases SIgA-stimulated phosphorylation of cytoplasmic proteins, including phospholipase C-gamma and MAP kinases, all actions that may be advantageous to the pathogen. This is Secretory immunoglobulin A-binding protein EsiB from Escherichia coli O6:H1 (strain CFT073 / ATCC 700928 / UPEC).